We begin with the raw amino-acid sequence, 107 residues long: uncharacterized protein (107 aa).

Topologically, residues 1-4 (MSLV) are cytoplasmic. A helical transmembrane segment spans residues 5 to 25 (IDIADTIVSLTALIGLIITLI). Residues 26–107 (KFHSQNKEDA…ELCRSSDRSK (82 aa)) lie on the Extracellular side of the membrane.

The protein resides in the host membrane. This is an uncharacterized protein from Acidianus sp. F28 (AFV-2).